A 99-amino-acid polypeptide reads, in one-letter code: YcgL domain-containing protein HD_1373 (99 aa).

A YcgL domain is found at 8-92; sequence NFCAIYKSMS…PAENLLKQFL (85 aa).

The sequence is that of YcgL domain-containing protein HD_1373 from Haemophilus ducreyi (strain 35000HP / ATCC 700724).